Here is a 179-residue protein sequence, read N- to C-terminus: MARLKELYHKEIVEQLTKDFGYSNVMQVPKIEKIVVNMGLGEAIQNVKILDSAVEELAAIAGQKAVITKAKKSIAGFKLRQGMPIGCMVTLRREKMYEFLDRLINVALPRVRDFKGVSAKGFDGRGNYSLGVKEQLIFPEINYDKIDKIKGLNITIVTSAKTDEESRALLKHLGMPFRH.

It belongs to the universal ribosomal protein uL5 family. In terms of assembly, part of the 50S ribosomal subunit; part of the 5S rRNA/L5/L18/L25 subcomplex. Contacts the 5S rRNA and the P site tRNA. Forms a bridge to the 30S subunit in the 70S ribosome.

Its function is as follows. This is one of the proteins that bind and probably mediate the attachment of the 5S RNA into the large ribosomal subunit, where it forms part of the central protuberance. In the 70S ribosome it contacts protein S13 of the 30S subunit (bridge B1b), connecting the 2 subunits; this bridge is implicated in subunit movement. Contacts the P site tRNA; the 5S rRNA and some of its associated proteins might help stabilize positioning of ribosome-bound tRNAs. This chain is Large ribosomal subunit protein uL5, found in Geobacter sulfurreducens (strain ATCC 51573 / DSM 12127 / PCA).